The sequence spans 152 residues: Transcriptional repressor NrdR (152 aa).

Residues 3-34 (CPFCNHGELKVIDSRNAPEANAIKRRRECLNC) fold into a zinc finger. In terms of domain architecture, ATP-cone spans 48-138 (LQVLKRDGRY…VYRRFKDVGE (91 aa)).

It belongs to the NrdR family. The cofactor is Zn(2+).

Its function is as follows. Negatively regulates transcription of bacterial ribonucleotide reductase nrd genes and operons by binding to NrdR-boxes. This chain is Transcriptional repressor NrdR, found in Chlamydia abortus (strain DSM 27085 / S26/3) (Chlamydophila abortus).